A 68-amino-acid chain; its full sequence is MLCLPVFIILLLLASPAAPKSLETRIQNDLIRAGLTDADLKTEKGFLSGLLNVAGSVCCKVDTSCCSN.

A signal peptide spans Met1–Pro19. Residues Lys20–Ala54 constitute a propeptide that is removed on maturation.

The protein belongs to the conotoxin T superfamily. Contains 2 disulfide bonds that can be either 'C1-C3, C2-C4' or 'C1-C4, C2-C3', since these disulfide connectivities have been observed for conotoxins with cysteine framework V (for examples, see AC P0DQQ7 and AC P81755). As to expression, expressed by the venom duct.

Its subcellular location is the secreted. This Conus litteratus (Lettered cone) protein is Conotoxin Lt5.2.